The following is a 371-amino-acid chain: dTDP-4-amino-4,6-dideoxy-D-glucose transaminase (371 aa).

K186 is subject to N6-(pyridoxal phosphate)lysine.

This sequence belongs to the DegT/DnrJ/EryC1 family. Pyridoxal 5'-phosphate is required as a cofactor.

The enzyme catalyses dTDP-4-amino-4,6-dideoxy-D-glucose + 2-oxoglutarate = dTDP-4-dehydro-6-deoxy-alpha-D-glucose + L-glutamate. Its pathway is bacterial outer membrane biogenesis; lipopolysaccharide biosynthesis. Catalyzes the conversion of dTDP-4-dehydro-6-deoxy-D-glucose (dTDP-D-Glc4O) to dTDP-4-amino-4,6-dideoxy-D-glucose (dTDP-D-Qui4N). The chain is dTDP-4-amino-4,6-dideoxy-D-glucose transaminase (vioA) from Escherichia coli.